Consider the following 388-residue polypeptide: Acyl-[acyl-carrier-protein] dehydrogenase MbtN (388 aa).

It belongs to the acyl-CoA dehydrogenase family. Requires FAD as cofactor.

It participates in siderophore biosynthesis; mycobactin biosynthesis. Its function is as follows. Catalyzes the dehydrogenation at the alpha-beta position of ACP-bound acyl chains. This results in the introduction of a double bond in the lipidic chain, which is further transferred to the epsilon-amino group of lysine residue in the mycobactin core by MbtK. This is Acyl-[acyl-carrier-protein] dehydrogenase MbtN (mbtN) from Mycolicibacterium paratuberculosis (strain ATCC BAA-968 / K-10) (Mycobacterium paratuberculosis).